A 165-amino-acid polypeptide reads, in one-letter code: NADPH-dependent 7-cyano-7-deazaguanine reductase (165 aa).

Residues methionine 1–alanine 24 are disordered. The active-site Thioimide intermediate is the cysteine 56. The Proton donor role is filled by aspartate 63. Substrate is bound by residues valine 78–serine 80 and methionine 97–glutamate 98.

Belongs to the GTP cyclohydrolase I family. QueF type 1 subfamily.

The protein localises to the cytoplasm. The catalysed reaction is 7-aminomethyl-7-carbaguanine + 2 NADP(+) = 7-cyano-7-deazaguanine + 2 NADPH + 3 H(+). The protein operates within tRNA modification; tRNA-queuosine biosynthesis. Catalyzes the NADPH-dependent reduction of 7-cyano-7-deazaguanine (preQ0) to 7-aminomethyl-7-deazaguanine (preQ1). This chain is NADPH-dependent 7-cyano-7-deazaguanine reductase, found in Nitratidesulfovibrio vulgaris (strain ATCC 29579 / DSM 644 / CCUG 34227 / NCIMB 8303 / VKM B-1760 / Hildenborough) (Desulfovibrio vulgaris).